We begin with the raw amino-acid sequence, 603 residues long: Proline--tRNA ligase (603 aa).

The protein belongs to the class-II aminoacyl-tRNA synthetase family. ProS type 1 subfamily. Homodimer.

It localises to the cytoplasm. The catalysed reaction is tRNA(Pro) + L-proline + ATP = L-prolyl-tRNA(Pro) + AMP + diphosphate. Catalyzes the attachment of proline to tRNA(Pro) in a two-step reaction: proline is first activated by ATP to form Pro-AMP and then transferred to the acceptor end of tRNA(Pro). As ProRS can inadvertently accommodate and process non-cognate amino acids such as alanine and cysteine, to avoid such errors it has two additional distinct editing activities against alanine. One activity is designated as 'pretransfer' editing and involves the tRNA(Pro)-independent hydrolysis of activated Ala-AMP. The other activity is designated 'posttransfer' editing and involves deacylation of mischarged Ala-tRNA(Pro). The misacylated Cys-tRNA(Pro) is not edited by ProRS. The chain is Proline--tRNA ligase from Prochlorococcus marinus (strain SARG / CCMP1375 / SS120).